We begin with the raw amino-acid sequence, 244 residues long: Mannose-binding protein C (244 aa).

The N-terminal stretch at 1–18 (MSIFTSFLLLCVVTVVYA) is a signal peptide. The Collagen-like domain maps to 38–96 (GLNGFPGKDGRDGAKGEKGEPGQGLRGLQGPPGKVGPTGPPGNPGLKGAVGPKGDRGDR). Positions 40–101 (NGFPGKDGRD…DRGDRAEFDT (62 aa)) are disordered. Pro-43 is modified (4-hydroxyproline). Positions 45-57 (KDGRDGAKGEKGE) are enriched in basic and acidic residues. 4-hydroxyproline is present on residues Pro-58, Pro-69, Pro-78, and Pro-81. Residues 65–74 (LQGPPGKVGP) show a composition bias toward low complexity. Basic and acidic residues predominate over residues 90–99 (KGDRGDRAEF). Positions 108–126 (IAALRSELRALRNWVLFSL) form a coiled coil. A C-type lectin domain is found at 129-241 (KVGKKYFVSS…CSDSFLAICE (113 aa)). Cystine bridges form between Cys-151/Cys-240 and Cys-218/Cys-232. The N-linked (GlcNAc...) asparagine glycan is linked to Asn-210.

As to quaternary structure, oligomeric complex of 3 or more homotrimers. Interacts with MASP1 and MASP2. Interacts with MEP1A and MEP1B and may inhibit their catalytic activity. In terms of processing, hydroxylation on proline residues within the sequence motif, GXPG, is most likely to be 4-hydroxy as this fits the requirement for 4-hydroxylation in vertebrates.

Its subcellular location is the secreted. In terms of biological role, calcium-dependent lectin involved in innate immune defense. Binds mannose, fucose and N-acetylglucosamine on different microorganisms and activates the lectin complement pathway. Binds to late apoptotic cells, as well as to apoptotic blebs and to necrotic cells, but not to early apoptotic cells, facilitating their uptake by macrophages. This is Mannose-binding protein C (Mbl2) from Mus musculus (Mouse).